The following is a 466-amino-acid chain: Soluble pyridine nucleotide transhydrogenase (466 aa).

An FAD-binding site is contributed by 36–45; the sequence is ERYNNVGGGC.

This sequence belongs to the class-I pyridine nucleotide-disulfide oxidoreductase family. Requires FAD as cofactor.

It is found in the cytoplasm. The catalysed reaction is NAD(+) + NADPH = NADH + NADP(+). Conversion of NADPH, generated by peripheral catabolic pathways, to NADH, which can enter the respiratory chain for energy generation. The protein is Soluble pyridine nucleotide transhydrogenase of Yersinia pseudotuberculosis serotype O:1b (strain IP 31758).